The primary structure comprises 120 residues: MYTLAGYESFWAFLLIASLVPVLAVGTSSLVAPSSKAAEKRTSYESGIEPMGESWIQFQIRYYMFALVFVVFDVETVFLYPWAMSFQQLGVLAFIEALVFVLVLIIGLVYAWRKGALEWS.

3 helical membrane passes run 10–30 (FWAF…TSSL), 64–84 (MFAL…PWAM), and 89–109 (LGVL…IGLV).

The protein belongs to the complex I subunit 3 family. NDH is composed of at least 16 different subunits, 5 of which are encoded in the nucleus.

It is found in the plastid. The protein localises to the chloroplast thylakoid membrane. The enzyme catalyses a plastoquinone + NADH + (n+1) H(+)(in) = a plastoquinol + NAD(+) + n H(+)(out). It catalyses the reaction a plastoquinone + NADPH + (n+1) H(+)(in) = a plastoquinol + NADP(+) + n H(+)(out). Its function is as follows. NDH shuttles electrons from NAD(P)H:plastoquinone, via FMN and iron-sulfur (Fe-S) centers, to quinones in the photosynthetic chain and possibly in a chloroplast respiratory chain. The immediate electron acceptor for the enzyme in this species is believed to be plastoquinone. Couples the redox reaction to proton translocation, and thus conserves the redox energy in a proton gradient. This is NAD(P)H-quinone oxidoreductase subunit 3, chloroplastic from Zygnema circumcarinatum (Green alga).